The chain runs to 68 residues: Large ribosomal subunit protein uL29 (68 aa).

This sequence belongs to the universal ribosomal protein uL29 family.

The protein is Large ribosomal subunit protein uL29 of Picosynechococcus sp. (strain ATCC 27264 / PCC 7002 / PR-6) (Agmenellum quadruplicatum).